The sequence spans 321 residues: Lipoyl synthase (321 aa).

C68, C73, C79, C94, C98, C101, and S308 together coordinate [4Fe-4S] cluster. The region spanning 80–297 (FNHGTATFMI…RVFAEEIGFT (218 aa)) is the Radical SAM core domain.

The protein belongs to the radical SAM superfamily. Lipoyl synthase family. [4Fe-4S] cluster serves as cofactor.

It is found in the cytoplasm. It carries out the reaction [[Fe-S] cluster scaffold protein carrying a second [4Fe-4S](2+) cluster] + N(6)-octanoyl-L-lysyl-[protein] + 2 oxidized [2Fe-2S]-[ferredoxin] + 2 S-adenosyl-L-methionine + 4 H(+) = [[Fe-S] cluster scaffold protein] + N(6)-[(R)-dihydrolipoyl]-L-lysyl-[protein] + 4 Fe(3+) + 2 hydrogen sulfide + 2 5'-deoxyadenosine + 2 L-methionine + 2 reduced [2Fe-2S]-[ferredoxin]. It functions in the pathway protein modification; protein lipoylation via endogenous pathway; protein N(6)-(lipoyl)lysine from octanoyl-[acyl-carrier-protein]: step 2/2. Its function is as follows. Catalyzes the radical-mediated insertion of two sulfur atoms into the C-6 and C-8 positions of the octanoyl moiety bound to the lipoyl domains of lipoate-dependent enzymes, thereby converting the octanoylated domains into lipoylated derivatives. The polypeptide is Lipoyl synthase (Shewanella woodyi (strain ATCC 51908 / MS32)).